The chain runs to 789 residues: LPS-assembly protein LptD (789 aa).

Positions 1–39 (MPPRQLSQTTPSCAVVPRKRRLVAALIAVPGLMPALAHA) are cleaved as a signal peptide.

It belongs to the LptD family. Component of the lipopolysaccharide transport and assembly complex. Interacts with LptE and LptA.

It is found in the cell outer membrane. Together with LptE, is involved in the assembly of lipopolysaccharide (LPS) at the surface of the outer membrane. In Paraburkholderia xenovorans (strain LB400), this protein is LPS-assembly protein LptD.